Reading from the N-terminus, the 190-residue chain is Imidazoleglycerol-phosphate dehydratase (190 aa).

This sequence belongs to the imidazoleglycerol-phosphate dehydratase family.

It localises to the cytoplasm. It carries out the reaction D-erythro-1-(imidazol-4-yl)glycerol 3-phosphate = 3-(imidazol-4-yl)-2-oxopropyl phosphate + H2O. It functions in the pathway amino-acid biosynthesis; L-histidine biosynthesis; L-histidine from 5-phospho-alpha-D-ribose 1-diphosphate: step 6/9. The chain is Imidazoleglycerol-phosphate dehydratase from Methanococcus maripaludis (strain C5 / ATCC BAA-1333).